We begin with the raw amino-acid sequence, 351 residues long: Nicotinate-nucleotide--dimethylbenzimidazole phosphoribosyltransferase (351 aa).

E317 (proton acceptor) is an active-site residue.

Belongs to the CobT family.

The catalysed reaction is 5,6-dimethylbenzimidazole + nicotinate beta-D-ribonucleotide = alpha-ribazole 5'-phosphate + nicotinate + H(+). The protein operates within nucleoside biosynthesis; alpha-ribazole biosynthesis; alpha-ribazole from 5,6-dimethylbenzimidazole: step 1/2. In terms of biological role, catalyzes the synthesis of alpha-ribazole-5'-phosphate from nicotinate mononucleotide (NAMN) and 5,6-dimethylbenzimidazole (DMB). The polypeptide is Nicotinate-nucleotide--dimethylbenzimidazole phosphoribosyltransferase (Bradyrhizobium sp. (strain BTAi1 / ATCC BAA-1182)).